Here is a 427-residue protein sequence, read N- to C-terminus: Adenylosuccinate synthetase (427 aa).

GTP contacts are provided by residues 12–18 (GDEGKGK) and 40–42 (GHT). Residue Asp-13 is the Proton acceptor of the active site. Mg(2+) is bound by residues Asp-13 and Gly-40. IMP contacts are provided by residues 13–16 (DEGK), 38–41 (NAGH), Thr-128, Arg-142, Gln-223, Thr-238, and Arg-302. His-41 (proton donor) is an active-site residue. A substrate-binding site is contributed by 298 to 304 (VTTGRDR). Residues Arg-304, 330–332 (KLD), and 412–414 (GVG) each bind GTP.

The protein belongs to the adenylosuccinate synthetase family. As to quaternary structure, homodimer. Requires Mg(2+) as cofactor.

It is found in the cytoplasm. It carries out the reaction IMP + L-aspartate + GTP = N(6)-(1,2-dicarboxyethyl)-AMP + GDP + phosphate + 2 H(+). It functions in the pathway purine metabolism; AMP biosynthesis via de novo pathway; AMP from IMP: step 1/2. Its function is as follows. Plays an important role in the de novo pathway of purine nucleotide biosynthesis. Catalyzes the first committed step in the biosynthesis of AMP from IMP. This Streptomyces coelicolor (strain ATCC BAA-471 / A3(2) / M145) protein is Adenylosuccinate synthetase.